A 362-amino-acid polypeptide reads, in one-letter code: sn-glycerol-3-phosphate import ATP-binding protein UgpC (362 aa).

The ABC transporter domain occupies 4–235; that stretch reads LTLQSVKKTY…PATVFVASFI (232 aa). 37-44 is an ATP binding site; it reads GPSGCGKS.

It belongs to the ABC transporter superfamily. sn-glycerol-3-phosphate importer (TC 3.A.1.1.3) family. As to quaternary structure, the complex is composed of two ATP-binding proteins (UgpC), two transmembrane proteins (UgpA and UgpE) and a solute-binding protein (UgpB).

It is found in the cell inner membrane. It carries out the reaction sn-glycerol 3-phosphate(out) + ATP + H2O = sn-glycerol 3-phosphate(in) + ADP + phosphate + H(+). In terms of biological role, part of the ABC transporter complex UgpBAEC involved in sn-glycerol-3-phosphate (G3P) import. Responsible for energy coupling to the transport system. The sequence is that of sn-glycerol-3-phosphate import ATP-binding protein UgpC from Paraburkholderia xenovorans (strain LB400).